A 571-amino-acid polypeptide reads, in one-letter code: Proline--tRNA ligase (571 aa).

Belongs to the class-II aminoacyl-tRNA synthetase family. ProS type 1 subfamily. As to quaternary structure, homodimer.

The protein resides in the cytoplasm. It carries out the reaction tRNA(Pro) + L-proline + ATP = L-prolyl-tRNA(Pro) + AMP + diphosphate. In terms of biological role, catalyzes the attachment of proline to tRNA(Pro) in a two-step reaction: proline is first activated by ATP to form Pro-AMP and then transferred to the acceptor end of tRNA(Pro). As ProRS can inadvertently accommodate and process non-cognate amino acids such as alanine and cysteine, to avoid such errors it has two additional distinct editing activities against alanine. One activity is designated as 'pretransfer' editing and involves the tRNA(Pro)-independent hydrolysis of activated Ala-AMP. The other activity is designated 'posttransfer' editing and involves deacylation of mischarged Ala-tRNA(Pro). The misacylated Cys-tRNA(Pro) is not edited by ProRS. In Pasteurella multocida (strain Pm70), this protein is Proline--tRNA ligase.